The chain runs to 29 residues: Cyclotide mden-C (29 aa).

A cross-link (cyclopeptide (Gly-Asn)) is located at residues 1-29; the sequence is GKPICGETCFKGKCYTPGCTCSYPVCKKN. 3 disulfide bridges follow: C5/C19, C9/C21, and C14/C26.

The protein belongs to the cyclotide family. This is a cyclic peptide.

Probably participates in a plant defense mechanism. The chain is Cyclotide mden-C from Melicytus dentatus (Tree violet).